Here is a 189-residue protein sequence, read N- to C-terminus: Peptidyl-tRNA hydrolase (189 aa).

Tyrosine 15 lines the tRNA pocket. Histidine 20 acts as the Proton acceptor in catalysis. TRNA is bound by residues phenylalanine 66, asparagine 68, and asparagine 114.

It belongs to the PTH family. Monomer.

It localises to the cytoplasm. It catalyses the reaction an N-acyl-L-alpha-aminoacyl-tRNA + H2O = an N-acyl-L-amino acid + a tRNA + H(+). Hydrolyzes ribosome-free peptidyl-tRNAs (with 1 or more amino acids incorporated), which drop off the ribosome during protein synthesis, or as a result of ribosome stalling. In terms of biological role, catalyzes the release of premature peptidyl moieties from peptidyl-tRNA molecules trapped in stalled 50S ribosomal subunits, and thus maintains levels of free tRNAs and 50S ribosomes. This is Peptidyl-tRNA hydrolase from Streptococcus thermophilus (strain CNRZ 1066).